A 289-amino-acid polypeptide reads, in one-letter code: MSNQNSKKHLGHTARKRFGQNFLHDMNVIHNIVSAINPKNGQFLFEIGPGLGALTEPVAEQVDKLTVVELDRDLAERLRHHPFLNHKLTIIEQDALRFNFREYFESLELKEGEGVRVFGNLPYNISTPLMFHLFKFHDLIQDMHFMLQKEVVKRLCAAPNSKAYGRLTIMAQYYCQVVPVLEVPPTAFKPAPKVDSAVVRLMPHKVLPHPVKDVYWLNRVTTQAFNQRRKTLRNALSTLFSPEQLEALNIDLNARAENLSIADYARLANWLYDNPPAVDNQEEIIDEDI.

S-adenosyl-L-methionine contacts are provided by N21, L23, G48, E69, D94, and N120.

Belongs to the class I-like SAM-binding methyltransferase superfamily. rRNA adenine N(6)-methyltransferase family. RsmA subfamily.

Its subcellular location is the cytoplasm. The enzyme catalyses adenosine(1518)/adenosine(1519) in 16S rRNA + 4 S-adenosyl-L-methionine = N(6)-dimethyladenosine(1518)/N(6)-dimethyladenosine(1519) in 16S rRNA + 4 S-adenosyl-L-homocysteine + 4 H(+). Specifically dimethylates two adjacent adenosines (A1518 and A1519) in the loop of a conserved hairpin near the 3'-end of 16S rRNA in the 30S particle. May play a critical role in biogenesis of 30S subunits. The protein is Ribosomal RNA small subunit methyltransferase A of Actinobacillus pleuropneumoniae serotype 3 (strain JL03).